The sequence spans 423 residues: F-box/LRR-repeat protein 2 (423 aa).

The F-box domain occupies glycine 9–isoleucine 55. 13 LRR repeats span residues glutamine 61–glycine 87, cysteine 88–glycine 113, cysteine 114–serine 139, cysteine 140–tryptophan 165, cysteine 166–glycine 191, cysteine 192–serine 217, cysteine 218–glycine 243, cysteine 244–arginine 269, cysteine 270–glutamate 295, cysteine 296–histidine 321, cysteine 322–asparagine 350, cysteine 351–aspartate 375, and cysteine 376–alanine 401. The interaction with Calmodulin stretch occupies residues leucine 80–glycine 90. A Glycyl lysine isopeptide (Lys-Gly) (interchain with G-Cter in ubiquitin) cross-link involves residue lysine 201. Threonine 404 bears the Phosphothreonine mark. A lipid anchor (S-geranylgeranyl cysteine) is attached at cysteine 420. Residues cysteine 420–leucine 423 carry the CAAX motif motif.

As to quaternary structure, part of the SCF (SKP1-CUL1-F-box) E3 ubiquitin-protein ligase complex SCF(FBXL2) composed of CUL1, SKP1, RBX1 and FBXL2. Interacts with calmodulin; may antagonize substrate ubiquitination by SCF(FBXL2). May interact with PIK3R1. Interacts with PTPN13. Phosphorylated by GSK-beta (GSK3B), promoting recognition by FBXO3, leading to its ubiquitination by the SCF(FBXO3) complex. Post-translationally, ubiquitinated at Lys-201 by the SCF(FBXO3) complex in response to lipopolysaccharide (LPS), leading to its degradation by the proteasome.

It is found in the membrane. Its pathway is protein modification; protein ubiquitination. Its function is as follows. Calcium-activated substrate recognition component of the SCF (SKP1-cullin-F-box protein) E3 ubiquitin-protein ligase complex, SCF(FBXL2), which mediates the ubiquitination and subsequent proteasomal degradation of target proteins. Unlike many F-box proteins, FBXL2 does not seem to target phosphodegron within its substrates but rather calmodulin-binding motifs and is thereby antagonized by calmodulin. This is the case for the cyclins CCND2 and CCND3 which polyubiquitination and subsequent degradation are inhibited by calmodulin. Through CCND2 and CCND3 degradation induces cell-cycle arrest in G(0). SCF(FBXL2) also mediates PIK3R2 ubiquitination and proteasomal degradation thereby regulating phosphatidylinositol 3-kinase signaling and autophagy. PCYT1A monoubiquitination by SCF(FBXL2) and subsequent degradation regulates synthesis of phosphatidylcholine, which is utilized for formation of membranes and of pulmonary surfactant. The SCF(FBXL2) complex acts as a regulator of inflammation by mediating ubiquitination and degradation of TRAF proteins (TRAF1, TRAF2, TRAF3, TRAF4, TRAF5 and TRAF6). The SCF(FBXL2) complex acts as a negative regulator of the NLRP3 inflammasome by mediating ubiquitination and degradation of NLRP3. This is F-box/LRR-repeat protein 2 from Pongo abelii (Sumatran orangutan).